A 170-amino-acid chain; its full sequence is Acireductone dioxygenase (170 aa).

Residues His-99, His-101, Glu-105, and His-144 each coordinate Fe(2+). Residues His-99, His-101, Glu-105, and His-144 each coordinate Ni(2+).

It belongs to the acireductone dioxygenase (ARD) family. As to quaternary structure, monomer. Fe(2+) serves as cofactor. It depends on Ni(2+) as a cofactor.

It carries out the reaction 1,2-dihydroxy-5-(methylsulfanyl)pent-1-en-3-one + O2 = 3-(methylsulfanyl)propanoate + CO + formate + 2 H(+). The catalysed reaction is 1,2-dihydroxy-5-(methylsulfanyl)pent-1-en-3-one + O2 = 4-methylsulfanyl-2-oxobutanoate + formate + 2 H(+). It functions in the pathway amino-acid biosynthesis; L-methionine biosynthesis via salvage pathway; L-methionine from S-methyl-5-thio-alpha-D-ribose 1-phosphate: step 5/6. Catalyzes 2 different reactions between oxygen and the acireductone 1,2-dihydroxy-3-keto-5-methylthiopentene (DHK-MTPene) depending upon the metal bound in the active site. Fe-containing acireductone dioxygenase (Fe-ARD) produces formate and 2-keto-4-methylthiobutyrate (KMTB), the alpha-ketoacid precursor of methionine in the methionine recycle pathway. Ni-containing acireductone dioxygenase (Ni-ARD) produces methylthiopropionate, carbon monoxide and formate, and does not lie on the methionine recycle pathway. In Bacillus thuringiensis (strain Al Hakam), this protein is Acireductone dioxygenase.